We begin with the raw amino-acid sequence, 458 residues long: UDP-N-acetylmuramate--L-alanine ligase (458 aa).

118–124 (GTHGKTT) serves as a coordination point for ATP.

The protein belongs to the MurCDEF family.

It is found in the cytoplasm. It catalyses the reaction UDP-N-acetyl-alpha-D-muramate + L-alanine + ATP = UDP-N-acetyl-alpha-D-muramoyl-L-alanine + ADP + phosphate + H(+). The protein operates within cell wall biogenesis; peptidoglycan biosynthesis. Functionally, cell wall formation. The chain is UDP-N-acetylmuramate--L-alanine ligase from Clostridium botulinum (strain Kyoto / Type A2).